Reading from the N-terminus, the 199-residue chain is Pyridoxal 5'-phosphate synthase subunit PdxT (199 aa).

Residue 52 to 54 (GES) participates in L-glutamine binding. The Nucleophile role is filled by Cys84. L-glutamine is bound by residues Arg115 and 143–144 (IR). Residues His179 and Glu181 each act as charge relay system in the active site.

It belongs to the glutaminase PdxT/SNO family. In terms of assembly, in the presence of PdxS, forms a dodecamer of heterodimers. Only shows activity in the heterodimer.

The enzyme catalyses aldehydo-D-ribose 5-phosphate + D-glyceraldehyde 3-phosphate + L-glutamine = pyridoxal 5'-phosphate + L-glutamate + phosphate + 3 H2O + H(+). It carries out the reaction L-glutamine + H2O = L-glutamate + NH4(+). It functions in the pathway cofactor biosynthesis; pyridoxal 5'-phosphate biosynthesis. In terms of biological role, catalyzes the hydrolysis of glutamine to glutamate and ammonia as part of the biosynthesis of pyridoxal 5'-phosphate. The resulting ammonia molecule is channeled to the active site of PdxS. In Methanosarcina mazei (strain ATCC BAA-159 / DSM 3647 / Goe1 / Go1 / JCM 11833 / OCM 88) (Methanosarcina frisia), this protein is Pyridoxal 5'-phosphate synthase subunit PdxT.